The chain runs to 384 residues: Deoxyguanosinetriphosphate triphosphohydrolase-like protein (384 aa).

One can recognise an HD domain in the interval 62–198; the sequence is RLTHSLEVST…AALADDISYI (137 aa).

It belongs to the dGTPase family. Type 2 subfamily.

The sequence is that of Deoxyguanosinetriphosphate triphosphohydrolase-like protein from Rickettsia peacockii (strain Rustic).